The sequence spans 219 residues: Endo-type membrane-bound lytic murein transglycosylase A-like protein (219 aa).

This sequence belongs to the transglycosylase Slt family.

The catalysed reaction is Endolytic cleavage of the (1-&gt;4)-beta-glycosidic linkage between N-acetylmuramic acid (MurNAc) and N-acetylglucosamine (GlcNAc) residues in peptidoglycan with concomitant formation of a 1,6-anhydrobond in the MurNAc residue.. Murein-degrading enzyme. May play a role in recycling of muropeptides during cell elongation and/or cell division (Potential). In Shigella flexneri, this protein is Endo-type membrane-bound lytic murein transglycosylase A-like protein.